The primary structure comprises 216 residues: Ras-related protein Rab-11A (216 aa).

An N-acetylglycine modification is found at Gly-2. Ser-20, Gly-21, Val-22, Gly-23, Lys-24, Ser-25, Asn-26, Asn-37, Leu-38, Ser-40, Ser-42, and Thr-43 together coordinate GTP. Ser-25 is a binding site for Mg(2+). A Switch 1 motif is present at residues 36–47 (FNLESKSTIGVE). Mg(2+)-binding residues include Thr-43 and Asp-66. The short motif at 67–86 (TAGQERYRAITSAYYRGAVG) is the Switch 2 element. Residues Gly-69, Asn-124, Lys-125, Asp-127, Ala-155, and Leu-156 each contribute to the GTP site. Residues 183 to 208 (DRRENDMSPSNNVVPIHVPPTTENKP) are disordered. Residues Cys-212 and Cys-213 are each lipidated (S-geranylgeranyl cysteine). Residue Cys-213 is modified to Cysteine methyl ester. A propeptide spans 214-216 (QNI) (removed in mature form).

The protein belongs to the small GTPase superfamily. Rab family. It depends on Mg(2+) as a cofactor.

It localises to the cell membrane. The protein resides in the endosome membrane. It is found in the recycling endosome membrane. Its subcellular location is the cleavage furrow. The protein localises to the cytoplasmic vesicle. It localises to the phagosome. The protein resides in the cytoplasmic vesicle membrane. It is found in the golgi apparatus. Its subcellular location is the trans-Golgi network. The catalysed reaction is GTP + H2O = GDP + phosphate + H(+). Regulated by guanine nucleotide exchange factors (GEFs) which promote the exchange of bound GDP for free GTP. Regulated by GTPase activating proteins (GAPs) which increase the GTP hydrolysis activity. Inhibited by GDP dissociation inhibitors (GDIs) which prevent Rab-GDP dissociation. The small GTPases Rab are key regulators of intracellular membrane trafficking, from the formation of transport vesicles to their fusion with membranes. Rabs cycle between an inactive GDP-bound form and an active GTP-bound form that is able to recruit to membranes different set of downstream effectors directly responsible for vesicle formation, movement, tethering and fusion. The small Rab GTPase RAB11A regulates endocytic recycling. May also be involved in the regulation of preciliary trafficking and neosynthesized protein export. The polypeptide is Ras-related protein Rab-11A (RAB11A) (Gallus gallus (Chicken)).